The sequence spans 689 residues: Glycine--tRNA ligase beta subunit (689 aa).

It belongs to the class-II aminoacyl-tRNA synthetase family. In terms of assembly, tetramer of two alpha and two beta subunits.

It localises to the cytoplasm. The catalysed reaction is tRNA(Gly) + glycine + ATP = glycyl-tRNA(Gly) + AMP + diphosphate. The chain is Glycine--tRNA ligase beta subunit from Shigella boydii serotype 18 (strain CDC 3083-94 / BS512).